Here is an 806-residue protein sequence, read N- to C-terminus: Transitional endoplasmic reticulum ATPase (806 aa).

Alanine 2 carries the N-acetylalanine modification. Residues serine 3 and serine 7 each carry the phosphoserine modification. Residue lysine 8 forms a Glycyl lysine isopeptide (Lys-Gly) (interchain with G-Cter in SUMO2) linkage. The residue at position 13 (serine 13) is a Phosphoserine. Lysine 18 participates in a covalent cross-link: Glycyl lysine isopeptide (Lys-Gly) (interchain with G-Cter in SUMO2). A Phosphoserine modification is found at serine 37. Residue 247 to 253 coordinates ATP; it reads PGTGKTL. Lysine 315 is modified (N6,N6,N6-trimethyllysine; by VCPKMT). ATP is bound by residues asparagine 348 and histidine 384. Residue threonine 436 is modified to Phosphothreonine. Serine 462 carries the post-translational modification Phosphoserine. Residues lysine 502 and lysine 505 each carry the N6-acetyllysine modification. 521–526 is an ATP binding site; the sequence is GCGKTL. Lysine 668 bears the N6-acetyllysine; alternate mark. At lysine 668 the chain carries N6-succinyllysine; alternate. Serine 702 carries the phosphoserine modification. Residues 708-727 are disordered; the sequence is RRERERQTNPSAMEVEEDDP. N6-acetyllysine is present on lysine 754. The interval 768–806 is disordered; sequence FGSFRFPSGNQGGAGPSQGSGGGTGGSVYTEDNDDDLYG. Phosphoserine occurs at positions 770, 775, and 787. Residues 777-793 are compositionally biased toward gly residues; sequence NQGGAGPSQGSGGGTGG. An interaction with UBXN6 region spans residues 797–806; it reads TEDNDDDLYG. Tyrosine 805 carries the post-translational modification Phosphotyrosine.

Belongs to the AAA ATPase family. In terms of assembly, homohexamer. Forms a ring-shaped particle of 12.5 nm diameter, that displays 6-fold radial symmetry. Part of a ternary complex containing STX5A, NSFL1C and VCP. NSFL1C forms a homotrimer that binds to one end of a VCP homohexamer. The complex binds to membranes enriched in phosphatidylethanolamine-containing lipids and promotes Golgi membrane fusion. Binds to a heterodimer of NPLOC4 and UFD1, binding to this heterodimer inhibits Golgi-membrane fusion. Interaction with VCIP135 leads to dissociation of the complex via ATP hydrolysis by VCP. Part of a ternary complex containing NPLOC4, UFD1 and VCP. Interacts with NSFL1C-like protein p37; the complex has membrane fusion activity and is required for Golgi and endoplasmic reticulum biogenesis. Interacts with SELENOS and SYVN1, as well as with DERL1 (via SHP-box motif), DERL2 and DERL3; which probably transfer misfolded proteins from the ER to VCP. Interacts with SVIP and DERL1. Component of a complex required to couple retrotranslocation, ubiquitination and deglycosylation composed of NGLY1, SAKS1, AMFR, VCP and RAD23B. Part of a complex composed of STUB1/CHIP, VCP/p97, CHRNA3, and UBXN2A that modulates the ubiquitination and endoplasmic reticulum-associated degradation (ERAD) of CHRNA3. Within the complex UBXN2A acts as a scaffold protein required for the interaction of CHRNA3 with VCP/p97, this interaction also inhibits CHRNA3 ubiquitination by STUB1/CHIP and subsequently ERAD. Interacts with UBXN2A (via UBX domain); the interaction is required for the interaction of CHRNA3 in the STUB1-VCP-UBXN2A complex. Directly interacts with UBXN4 and RNF19A. Interacts with CASR. Interacts with UBE4B and YOD1. Interacts with clathrin. Interacts with RNF103. Interacts with TRIM13 and TRIM21. Component of a VCP/p97-AMFR/gp78 complex that participates in the final step of the endoplasmic reticulum-associated degradation (ERAD) of HMGCR. Interacts directly with AMFR/gp78 (via its VIM). Interacts with RHBDD1 (via C-terminal domain). Interacts with SPRTN; leading to recruitment to stalled replication forks. Interacts with WASHC5. Interacts with UBOX5. Interacts (via N-terminus) with UBXN7, UBXN8, and probably several other UBX domain-containing proteins (via UBX domains); the interactions are mutually exclusive with VIM-dependent interactions such as those with AMFR and SELENOS. Forms a complex with UBQLN1 and UBXN4. Interacts (via the PIM motif) with RNF31 (via the PUB domain). Interacts with RIGI and RNF125; interaction takes place when RIGI is ubiquitinated via 'Lys-63'-linked ubiquitin on its CARD domains, leading to recruit RNF125 and promote ubiquitination and degradation of RIGI. Interacts with BAG6. Interacts with UBXN10. Interacts with UBXN6; the interaction with UBXN6 is direct and competitive with UFD1. Forms a ternary complex with CAV1 and UBXN6. Interacts with PLAA, UBXN6 and YOD1; may form a complex involved in macroautophagy. Interacts with ANKZF1. Interacts with ubiquitin-binding protein FAF1. Interacts with ZFAND2B (via VIM motif); the interaction is direct. Interacts with ZFAND1 (via its ubiquitin-like region); this interaction occurs in an arsenite-dependent manner. Interacts with CCDC47. Interacts with LMBR1L and UBAC2. Interacts with ATXN3. Interacts with TEX264; bridging VCP to covalent DNA-protein cross-links (DPCs). Mg(2+) serves as cofactor. In terms of processing, ISGylated. Post-translationally, methylation at Lys-315 catalyzed by VCPKMT is increased in the presence of ASPSCR1. Lys-315 methylation may decrease ATPase activity. Phosphorylated by tyrosine kinases in response to T-cell antigen receptor activation. Phosphorylated in mitotic cells.

It is found in the cytoplasm. It localises to the cytosol. The protein localises to the endoplasmic reticulum. Its subcellular location is the nucleus. The protein resides in the stress granule. It carries out the reaction ATP + H2O = ADP + phosphate + H(+). Its function is as follows. Necessary for the fragmentation of Golgi stacks during mitosis and for their reassembly after mitosis. Involved in the formation of the transitional endoplasmic reticulum (tER). The transfer of membranes from the endoplasmic reticulum to the Golgi apparatus occurs via 50-70 nm transition vesicles which derive from part-rough, part-smooth transitional elements of the endoplasmic reticulum (tER). Vesicle budding from the tER is an ATP-dependent process. The ternary complex containing UFD1, VCP and NPLOC4 binds ubiquitinated proteins and is necessary for the export of misfolded proteins from the ER to the cytoplasm, where they are degraded by the proteasome. The NPLOC4-UFD1-VCP complex regulates spindle disassembly at the end of mitosis and is necessary for the formation of a closed nuclear envelope. Regulates E3 ubiquitin-protein ligase activity of RNF19A. Component of the VCP/p97-AMFR/gp78 complex that participates in the final step of the sterol-mediated ubiquitination and endoplasmic reticulum-associated degradation (ERAD) of HMGCR. Mediates the endoplasmic reticulum-associated degradation of CHRNA3 in cortical neurons as part of the STUB1-VCP-UBXN2A complex. Involved in endoplasmic reticulum stress-induced pre-emptive quality control, a mechanism that selectively attenuates the translocation of newly synthesized proteins into the endoplasmic reticulum and reroutes them to the cytosol for proteasomal degradation. Involved in clearance process by mediating G3BP1 extraction from stress granules. Also involved in DNA damage response: recruited to double-strand breaks (DSBs) sites in a RNF8- and RNF168-dependent manner and promotes the recruitment of TP53BP1 at DNA damage sites. Recruited to stalled replication forks by SPRTN: may act by mediating extraction of DNA polymerase eta (POLH) to prevent excessive translesion DNA synthesis and limit the incidence of mutations induced by DNA damage. Together with SPRTN metalloprotease, involved in the repair of covalent DNA-protein cross-links (DPCs) during DNA synthesis. Involved in interstrand cross-link repair in response to replication stress by mediating unloading of the ubiquitinated CMG helicase complex. Mediates extraction of PARP1 trapped to chromatin: recognizes and binds ubiquitinated PARP1 and promotes its removal. Required for cytoplasmic retrotranslocation of stressed/damaged mitochondrial outer-membrane proteins and their subsequent proteasomal degradation. Essential for the maturation of ubiquitin-containing autophagosomes and the clearance of ubiquitinated protein by autophagy. Acts as a negative regulator of type I interferon production by interacting with RIGI: interaction takes place when RIGI is ubiquitinated via 'Lys-63'-linked ubiquitin on its CARD domains, leading to recruit RNF125 and promote ubiquitination and degradation of RIGI. May play a role in the ubiquitin-dependent sorting of membrane proteins to lysosomes where they undergo degradation. May more particularly play a role in caveolins sorting in cells. By controlling the steady-state expression of the IGF1R receptor, indirectly regulates the insulin-like growth factor receptor signaling pathway. The chain is Transitional endoplasmic reticulum ATPase (VCP) from Sus scrofa (Pig).